We begin with the raw amino-acid sequence, 125 residues long: Small ribosomal subunit protein uS13 (125 aa).

Residues 90 to 125 are disordered; that stretch reads QRHRKGLPVRGQRTKTNARTRKGPKRTVAGKKKATK.

It belongs to the universal ribosomal protein uS13 family. As to quaternary structure, part of the 30S ribosomal subunit. Forms a loose heterodimer with protein S19. Forms two bridges to the 50S subunit in the 70S ribosome.

Its function is as follows. Located at the top of the head of the 30S subunit, it contacts several helices of the 16S rRNA. In the 70S ribosome it contacts the 23S rRNA (bridge B1a) and protein L5 of the 50S subunit (bridge B1b), connecting the 2 subunits; these bridges are implicated in subunit movement. Contacts the tRNAs in the A and P-sites. This is Small ribosomal subunit protein uS13 from Bifidobacterium longum subsp. infantis (strain ATCC 15697 / DSM 20088 / JCM 1222 / NCTC 11817 / S12).